Consider the following 147-residue polypeptide: NADH-quinone oxidoreductase subunit A (147 aa).

The next 3 helical transmembrane spans lie at 11–31 (IWPL…VMAL), 68–88 (LIAV…AWAV), and 93–113 (LGWP…AALA).

This sequence belongs to the complex I subunit 3 family. In terms of assembly, NDH-1 is composed of 14 different subunits. Subunits NuoA, H, J, K, L, M, N constitute the membrane sector of the complex.

The protein resides in the cell inner membrane. The catalysed reaction is a quinone + NADH + 5 H(+)(in) = a quinol + NAD(+) + 4 H(+)(out). Its function is as follows. NDH-1 shuttles electrons from NADH, via FMN and iron-sulfur (Fe-S) centers, to quinones in the respiratory chain. The immediate electron acceptor for the enzyme in this species is believed to be ubiquinone. Couples the redox reaction to proton translocation (for every two electrons transferred, four hydrogen ions are translocated across the cytoplasmic membrane), and thus conserves the redox energy in a proton gradient. This Nitrosospira multiformis (strain ATCC 25196 / NCIMB 11849 / C 71) protein is NADH-quinone oxidoreductase subunit A.